A 423-amino-acid chain; its full sequence is Probable sucrose-phosphatase 3b (423 aa).

It belongs to the sucrose phosphatase family. In terms of assembly, homodimer. Requires Mg(2+) as cofactor.

It carries out the reaction sucrose 6(F)-phosphate + H2O = sucrose + phosphate. It participates in glycan biosynthesis; sucrose biosynthesis; sucrose from D-fructose 6-phosphate and UDP-alpha-D-glucose: step 2/2. In terms of biological role, catalyzes the final step of sucrose synthesis. This Arabidopsis thaliana (Mouse-ear cress) protein is Probable sucrose-phosphatase 3b (SPP3B).